Reading from the N-terminus, the 504-residue chain is Prenylcysteine oxidase 1 (504 aa).

An N-terminal signal peptide occupies residues 1-28; the sequence is MGRFAATLVGSLFGLGLLLCGLGRLASA. Residues Asn196, Asn322, and Asn352 are each glycosylated (N-linked (GlcNAc...) asparagine).

Belongs to the prenylcysteine oxidase family. It depends on FAD as a cofactor. Expressed mainly in cerebrum.

It is found in the lysosome. The catalysed reaction is an S-polyprenyl-L-cysteine + O2 + H2O = a polyprenal + L-cysteine + H2O2. It carries out the reaction S-(2E,6E)-farnesyl-L-cysteine + O2 + H2O = (2E,6E)-farnesal + L-cysteine + H2O2. It catalyses the reaction [(2E,6E,10E)-geranylgeranyl]-L-cysteine + O2 + H2O = (2E,6E,10E)-geranylgeranial + L-cysteine + H2O2. Prenylcysteine oxidase that cleaves the thioether bond of prenyl-L-cysteines, such as farnesylcysteine and geranylgeranylcysteine. Only active against free prenylcysteines and not prenylcysteine residues within prenylated proteins or peptides. Involved in the final step in the degradation of prenylated proteins, by degrading prenylcysteines after the protein has been degraded. This chain is Prenylcysteine oxidase 1, found in Rattus norvegicus (Rat).